Here is a 691-residue protein sequence, read N- to C-terminus: Lipase 2 (691 aa).

Positions 1–37 (MLRGQEERKYSIRKYSIGVVSVLAATMFVVSSHEAQA) are cleaved as a signal peptide. Residues 34 to 72 (EAQASEKTPTSNAAAQKETLNQPGEQGNAITSHQMQSGK) are compositionally biased toward polar residues. Residues 34-267 (EAQASEKTPT…KPTDKNTDNK (234 aa)) are disordered. A propeptide spanning residues 38–296 (SEKTPTSNAA…ADAKKVRPLK (259 aa)) is cleaved from the precursor. Basic and acidic residues predominate over residues 73 to 82 (QLDDMHKENG). Polar residues-rich tracts occupy residues 83 to 115 (KSGT…NDNQ), 125 to 172 (SKQS…QPSI), and 186 to 207 (PTST…AQDA). Composition is skewed to basic and acidic residues over residues 226-238 (IDAK…RQSE) and 258-267 (KPTDKNTDNK). Ser413 serves as the catalytic Nucleophile. Residue Gly580 participates in Ca(2+) binding. Asp604 serves as the catalytic Charge relay system. Asp645 contributes to the Ca(2+) binding site. His646 acts as the Charge relay system in catalysis. Residues Asp648, Asp653, and Asp656 each contribute to the Ca(2+) site.

Belongs to the AB hydrolase superfamily. Lipase family.

It is found in the secreted. It carries out the reaction a triacylglycerol + H2O = a diacylglycerol + a fatty acid + H(+). This is Lipase 2 (lip2) from Staphylococcus aureus (strain Mu50 / ATCC 700699).